Reading from the N-terminus, the 152-residue chain is MPGKGDAPVLPGARAVARYVRISPMKARRVVNLVRGLPAKEALTVLQFAPQAASEQVYKVLASAIANAENNERLDPDALLVSEAYVDEGPTMKRFQPRAQGRAYRIRKRTCHITVVVEAVAPAAPKKAAAKKAAPAKETTPAATESKTEGAE.

Residues 124–145 are compositionally biased toward low complexity; it reads APKKAAAKKAAPAKETTPAATE. The segment at 124–152 is disordered; the sequence is APKKAAAKKAAPAKETTPAATESKTEGAE.

This sequence belongs to the universal ribosomal protein uL22 family. In terms of assembly, part of the 50S ribosomal subunit.

This protein binds specifically to 23S rRNA; its binding is stimulated by other ribosomal proteins, e.g. L4, L17, and L20. It is important during the early stages of 50S assembly. It makes multiple contacts with different domains of the 23S rRNA in the assembled 50S subunit and ribosome. Its function is as follows. The globular domain of the protein is located near the polypeptide exit tunnel on the outside of the subunit, while an extended beta-hairpin is found that lines the wall of the exit tunnel in the center of the 70S ribosome. This is Large ribosomal subunit protein uL22 from Salinispora tropica (strain ATCC BAA-916 / DSM 44818 / JCM 13857 / NBRC 105044 / CNB-440).